The sequence spans 2136 residues: U5 small nuclear ribonucleoprotein 200 kDa helicase (2136 aa).

Phosphoserine occurs at positions 17 and 26. Residues 39-81 (EVLSLVGKLEGTRMGDKAQRTKPQMQEERRAKRRKRDEDRHDM) are disordered. Residue Lys46 forms a Glycyl lysine isopeptide (Lys-Gly) (interchain with G-Cter in SUMO2) linkage. The span at 48–81 (EGTRMGDKAQRTKPQMQEERRAKRRKRDEDRHDM) shows a compositional bias: basic and acidic residues. Residues 54–84 (DKAQRTKPQMQEERRAKRRKRDEDRHDMNKM) are a coiled coil. Ser225 carries the phosphoserine modification. The residue at position 389 (Thr389) is a Phosphothreonine. Positions 395-2129 (DLDQGGEALA…YKFSVDVKEA (1735 aa)) are interaction with C9orf78 and WBP4. Residues 490–673 (RAALETDENL…FLRVDPAKGL (184 aa)) enclose the Helicase ATP-binding 1 domain. 503 to 510 (APTGAGKT) contributes to the ATP binding site. A DEAH box motif is present at residues 615 to 618 (DEIH). One can recognise a Helicase C-terminal 1 domain in the interval 684–921 (PLEQTYVGIT…NAKDAVNWLG (238 aa)). Tyr709 is modified (phosphotyrosine). Lys944 participates in a covalent cross-link: Glycyl lysine isopeptide (Lys-Gly) (interchain with G-Cter in SUMO). Lys971 is subject to N6-acetyllysine; alternate. Lys971 is covalently cross-linked (Glycyl lysine isopeptide (Lys-Gly) (interchain with G-Cter in SUMO); alternate). Positions 982-1286 (TELGRIASHY…SCETQLPVSF (305 aa)) constitute an SEC63 1 domain. Glycyl lysine isopeptide (Lys-Gly) (interchain with G-Cter in SUMO) cross-links involve residues Lys1071 and Lys1199. The interaction with TSSC4 stretch occupies residues 1282–2136 (LPVSFRHLIL…KEAETDSDSD (855 aa)). The Helicase ATP-binding 2 domain maps to 1337 to 1512 (NTVYNSDDNV…WLGCSATSTF (176 aa)). 1350 to 1357 (APTGSGKT) is a binding site for ATP. The residue at position 1428 (Thr1428) is a Phosphothreonine. Residues 1454-1457 (DEVH) carry the DEAH box motif. Residues 1545–1753 (PVYHAITKHS…TIENKQDAVD (209 aa)) form the Helicase C-terminal 2 domain. At Thr1765 the chain carries Phosphothreonine. One can recognise an SEC63 2 domain in the interval 1812 to 2124 (PLNLGMIAAY…GCDQEYKFSV (313 aa)). At Ser2002 the chain carries Phosphoserine. Residue Lys2091 forms a Glycyl lysine isopeptide (Lys-Gly) (interchain with G-Cter in SUMO) linkage. Residue Thr2131 is modified to Phosphothreonine. A phosphoserine mark is found at Ser2133 and Ser2135.

This sequence belongs to the helicase family. SKI2 subfamily. Component of a core complex containing at least PRPF8, SNRNP200, EFTUD2 and SNRNP40. Component of the U5 snRNP and U4/U6-U5 tri-snRNP complexes, building blocks of the spliceosome. Component of the U4/U6-U5 tri-snRNP complex composed of the U4, U6 and U5 snRNAs and at least PRPF3, PRPF4, PRPF6, PRPF8, PRPF31, SNRNP200, TXNL4A, SNRNP40, DDX23, CD2BP2, PPIH, SNU13, EFTUD2, SART1 and USP39. Component of precatalytic, catalytic and postcatalytic spliceosomal complexes. Component of the minor spliceosome, which splices U12-type introns. Interacts with C9orf78; the interaction is direct and mutually exclusive with its interaction with WBP4. Interacts with WBP4; the interaction is mutually exclusive with its interaction with C9orf78. Interacts with PRPF8. Interacts with TSSC4; the interaction is direct, excludes recruitment of C9ORF78 and WBP4 to SNRNP200 and negatively regulates its RNA helicase activity.

Its subcellular location is the nucleus. It carries out the reaction ATP + H2O = ADP + phosphate + H(+). In terms of biological role, catalyzes the ATP-dependent unwinding of U4/U6 RNA duplices, an essential step in the assembly of a catalytically active spliceosome. Plays a role in pre-mRNA splicing as core component of precatalytic, catalytic and postcatalytic spliceosomal complexes. As a component of the minor spliceosome, involved in the splicing of U12-type introns in pre-mRNAs. Involved in spliceosome assembly, activation and disassembly. Mediates changes in the dynamic network of RNA-RNA interactions in the spliceosome. The protein is U5 small nuclear ribonucleoprotein 200 kDa helicase (Snrnp200) of Mus musculus (Mouse).